The following is a 562-amino-acid chain: BOS complex subunit NCLN (562 aa).

The signal sequence occupies residues 1–41; the sequence is MLEEAGEVLESVLKASCLPLSFLLFVPAVLLLLGPPPAAEA. The Extracellular portion of the chain corresponds to 42–521; the sequence is AHESTVYRMQ…VMNAYRVKPA (480 aa). N-linked (GlcNAc...) asparagine glycosylation occurs at asparagine 240. Positions 420–447 are disordered; sequence GFDEGHLQPNREGSTCRSADLHGSDADP. The chain crosses the membrane as a helical span at residues 522-542; it reads IFDLLLAVCIAAYLGVAYVAV. The Cytoplasmic portion of the chain corresponds to 543–562; the sequence is QNFGLLYRMIQRLSLKTKQQ.

This sequence belongs to the nicastrin family. Component of the multi-pass translocon (MPT) complex.

Its subcellular location is the endoplasmic reticulum membrane. Its function is as follows. Component of the multi-pass translocon (MPT) complex that mediates insertion of multi-pass membrane proteins into the lipid bilayer of membranes. The MPT complex takes over after the SEC61 complex: following membrane insertion of the first few transmembrane segments of proteins by the SEC61 complex, the MPT complex occludes the lateral gate of the SEC61 complex to promote insertion of subsequent transmembrane regions. May antagonize Nodal signaling and subsequent organization of axial structures during mesodermal patterning, via its interaction with NOMO. The sequence is that of BOS complex subunit NCLN (NCLN) from Gallus gallus (Chicken).